A 234-amino-acid chain; its full sequence is MNSTPDTFQRPALRELTPLEARVLGVLIEKQHTVPDTYPLSLNALTAGCNQKTARSPVMNVSEAEVLTAIDGLKRLSLASEGSSSRVPRFEHNMNRVLGIPSQAAALLTMLLLRGPQTAAELRLNSARLHGFADISSVEAFLDELAARTPPLVVKLPRAPGARESRWMHLMCGDVAPDEAPAHGAHEDAVPPSEFEALKAEQKALTAELAQLRALVEYMANELGIDVGKLTRGV.

It belongs to the UPF0502 family.

The protein is UPF0502 protein BPSS1373 of Burkholderia pseudomallei (strain K96243).